Here is a 271-residue protein sequence, read N- to C-terminus: Formamidopyrimidine-DNA glycosylase (271 aa).

Residue proline 2 is the Schiff-base intermediate with DNA of the active site. The active-site Proton donor is the glutamate 3. Lysine 56 (proton donor; for beta-elimination activity) is an active-site residue. 3 residues coordinate DNA: histidine 89, arginine 107, and lysine 151. An FPG-type zinc finger spans residues 236 to 270 (NVYGRAGLQCRQCGTPVRLSRQGQRSTYFCPHCQR). Arginine 260 (proton donor; for delta-elimination activity) is an active-site residue.

Belongs to the FPG family. Monomer. Requires Zn(2+) as cofactor.

The catalysed reaction is Hydrolysis of DNA containing ring-opened 7-methylguanine residues, releasing 2,6-diamino-4-hydroxy-5-(N-methyl)formamidopyrimidine.. It carries out the reaction 2'-deoxyribonucleotide-(2'-deoxyribose 5'-phosphate)-2'-deoxyribonucleotide-DNA = a 3'-end 2'-deoxyribonucleotide-(2,3-dehydro-2,3-deoxyribose 5'-phosphate)-DNA + a 5'-end 5'-phospho-2'-deoxyribonucleoside-DNA + H(+). Functionally, involved in base excision repair of DNA damaged by oxidation or by mutagenic agents. Acts as a DNA glycosylase that recognizes and removes damaged bases. Has a preference for oxidized purines, such as 7,8-dihydro-8-oxoguanine (8-oxoG). Has AP (apurinic/apyrimidinic) lyase activity and introduces nicks in the DNA strand. Cleaves the DNA backbone by beta-delta elimination to generate a single-strand break at the site of the removed base with both 3'- and 5'-phosphates. This Acidovorax ebreus (strain TPSY) (Diaphorobacter sp. (strain TPSY)) protein is Formamidopyrimidine-DNA glycosylase.